We begin with the raw amino-acid sequence, 76 residues long: DNA-directed RNA polymerase subunit epsilon (76 aa).

Belongs to the RNA polymerase subunit epsilon family. In terms of assembly, RNAP is composed of a core of 2 alpha, a beta and a beta' subunit. The core is associated with a delta subunit, and at least one of epsilon or omega. When a sigma factor is associated with the core the holoenzyme is formed, which can initiate transcription.

The catalysed reaction is RNA(n) + a ribonucleoside 5'-triphosphate = RNA(n+1) + diphosphate. A non-essential component of RNA polymerase (RNAP). In Streptococcus gordonii (strain Challis / ATCC 35105 / BCRC 15272 / CH1 / DL1 / V288), this protein is DNA-directed RNA polymerase subunit epsilon.